The chain runs to 275 residues: Tumor necrosis factor-inducible gene 6 protein (275 aa).

Positions 1–17 are cleaved as a signal peptide; the sequence is MVVLLCLCVLLWEEAHG. The region spanning 36 to 129 is the Link domain; it reads GVYHREARAG…SERWDAYCYN (94 aa). Cystine bridges form between cysteine 58–cysteine 127, cysteine 82–cysteine 103, and cysteine 135–cysteine 161. An N-linked (GlcNAc...) asparagine glycan is attached at asparagine 118. The region spanning 135–247 is the CUB domain; that stretch reads CGGVFTDPKR…GGFQIKYVTV (113 aa). Ca(2+) contacts are provided by glutamate 183, aspartate 191, aspartate 232, serine 234, and valine 235. Residues cysteine 188 and cysteine 210 are joined by a disulfide bond. The span at 253–264 shows a compositional bias: polar residues; the sequence is SSQAKNTSTTGN. Positions 253-275 are disordered; sequence SSQAKNTSTTGNKKFLPGRFSHL. A glycan (N-linked (GlcNAc...) asparagine) is linked at asparagine 258.

Interacts (via Link domain) with inter-alpha-inhibitor (I-alpha-I) component bikunin. Interacts with ITIH2/HC2; this interaction is required for transesterification of the HC to hyaluronan. Interacts (via Link and CUB domains) with ITIH1. Chondroitin sulfate may be required for the stability of the complex. Interacts (via Link domain) with various C-X-C and C-C chemokines including PF4, CXCL8, CXCL11, CXCL12, CCL2, CCL7, CCL19, CCL21, and CCL27; this interaction interferes with chemokine binding to glycosaminoglycans. Interacts (primarily via Link domain) with BMP2; this interaction is inhibited by hyaluronan. Interacts (via both Link and CUB domains) with TNFSF11. Interacts (via CUB domain) with FN1 (via type III repeats 9-14); this interaction enhances fibronectin fibril assembly. TNFAIP6 may act as a bridging molecule between FN1 and THBS1. Expressed in epiphyseal and metaphyseal bone marrow of both the femur and tibia (at protein level).

The protein localises to the secreted. In terms of biological role, major regulator of extracellular matrix organization during tissue remodeling. Catalyzes the transfer of a heavy chain (HC) from inter-alpha-inhibitor (I-alpha-I) complex to hyaluronan. Cleaves the ester bond between the C-terminus of the HC and GalNAc residue of the chondroitin sulfate chain in I-alpha-I complex followed by transesterification of the HC to hyaluronan. In the process, potentiates the antiprotease function of I-alpha-I complex through release of free bikunin. Acts as a catalyst in the formation of hyaluronan-HC oligomers and hyaluronan-rich matrix surrounding the cumulus cell-oocyte complex, a necessary step for oocyte fertilization. Assembles hyaluronan in pericellular matrices that serve as platforms for receptor clustering and signaling. Enables binding of hyaluronan deposited on the surface of macrophages to LYVE1 on lymphatic endothelium and facilitates macrophage extravasation. Alters hyaluronan binding to functionally latent CD44 on vascular endothelium, switching CD44 into an active state that supports leukocyte rolling. Modulates the interaction of chemokines with extracellular matrix components and proteoglycans on endothelial cell surface, likely preventing chemokine gradient formation. In a negative feedback mechanism, may limit excessive neutrophil recruitment at inflammatory sites by antagonizing the association of CXCL8 with glycosaminoglycans on vascular endothelium. Has a role in osteogenesis and bone remodeling. Inhibits BMP2-dependent differentiation of mesenchymal stem cell to osteoblasts. Protects against bone erosion during inflammation by inhibiting TNFSF11/RANKL-dependent osteoclast activation. This chain is Tumor necrosis factor-inducible gene 6 protein (Tnfaip6), found in Mus musculus (Mouse).